Consider the following 193-residue polypeptide: FMN-dependent NADH:quinone oxidoreductase 1 (193 aa).

Residues S9, 15 to 17 (SIS), and 85 to 88 (MYNF) contribute to the FMN site.

This sequence belongs to the azoreductase type 1 family. In terms of assembly, homodimer. Requires FMN as cofactor.

It catalyses the reaction 2 a quinone + NADH + H(+) = 2 a 1,4-benzosemiquinone + NAD(+). The enzyme catalyses N,N-dimethyl-1,4-phenylenediamine + anthranilate + 2 NAD(+) = 2-(4-dimethylaminophenyl)diazenylbenzoate + 2 NADH + 2 H(+). Its function is as follows. Quinone reductase that provides resistance to thiol-specific stress caused by electrophilic quinones. Functionally, also exhibits azoreductase activity. Catalyzes the reductive cleavage of the azo bond in aromatic azo compounds to the corresponding amines. This Xanthomonas axonopodis pv. citri (strain 306) protein is FMN-dependent NADH:quinone oxidoreductase 1.